Reading from the N-terminus, the 336-residue chain is Protein-glutamate methylesterase/protein-glutamine glutaminase 1 (336 aa).

Residues 2–119 (KIAIVNDMPM…GNAQEAAAPL (118 aa)) enclose the Response regulatory domain. Asp-53 is modified (4-aspartylphosphate). A CheB-type methylesterase domain is found at 143–336 (PLRSGAPRQS…APRLLEIFAK (194 aa)). Active-site residues include Ser-159, His-186, and Asp-279.

This sequence belongs to the CheB family. In terms of processing, phosphorylated by CheA. Phosphorylation of the N-terminal regulatory domain activates the methylesterase activity.

The protein resides in the cytoplasm. It catalyses the reaction [protein]-L-glutamate 5-O-methyl ester + H2O = L-glutamyl-[protein] + methanol + H(+). The catalysed reaction is L-glutaminyl-[protein] + H2O = L-glutamyl-[protein] + NH4(+). Its function is as follows. Involved in chemotaxis. Part of a chemotaxis signal transduction system that modulates chemotaxis in response to various stimuli. Catalyzes the demethylation of specific methylglutamate residues introduced into the chemoreceptors (methyl-accepting chemotaxis proteins or MCP) by CheR. Also mediates the irreversible deamidation of specific glutamine residues to glutamic acid. This Pseudomonas fluorescens (strain ATCC BAA-477 / NRRL B-23932 / Pf-5) protein is Protein-glutamate methylesterase/protein-glutamine glutaminase 1.